Consider the following 968-residue polypeptide: RNA polymerase-associated protein RapA (968 aa).

In terms of domain architecture, Helicase ATP-binding spans 164-334; sequence DVGRRHAPRV…FARLRLLDPN (171 aa). 177-184 serves as a coordination point for ATP; that stretch reads DEVGLGKT. Positions 280 to 283 match the DEAH box motif; the sequence is DEAH. Positions 490–662 constitute a Helicase C-terminal domain; that stretch reads RVEWLMGYLT…YLASPDQTEG (173 aa).

It belongs to the SNF2/RAD54 helicase family. RapA subfamily. Interacts with the RNAP. Has a higher affinity for the core RNAP than for the holoenzyme. Its ATPase activity is stimulated by binding to RNAP.

Transcription regulator that activates transcription by stimulating RNA polymerase (RNAP) recycling in case of stress conditions such as supercoiled DNA or high salt concentrations. Probably acts by releasing the RNAP, when it is trapped or immobilized on tightly supercoiled DNA. Does not activate transcription on linear DNA. Probably not involved in DNA repair. This chain is RNA polymerase-associated protein RapA, found in Escherichia coli O9:H4 (strain HS).